Reading from the N-terminus, the 493-residue chain is Ribose import ATP-binding protein RbsA (493 aa).

ABC transporter domains are found at residues 5–241 (LKIS…VGRR) and 252–491 (EKGE…AAAI). 37-44 (GENGAGKS) contacts ATP.

This sequence belongs to the ABC transporter superfamily. Ribose importer (TC 3.A.1.2.1) family. The complex is composed of an ATP-binding protein (RbsA), two transmembrane proteins (RbsC) and a solute-binding protein (RbsB).

It localises to the cell inner membrane. It catalyses the reaction D-ribose(out) + ATP + H2O = D-ribose(in) + ADP + phosphate + H(+). Part of the ABC transporter complex RbsABC involved in ribose import. Responsible for energy coupling to the transport system. In Haemophilus influenzae (strain ATCC 51907 / DSM 11121 / KW20 / Rd), this protein is Ribose import ATP-binding protein RbsA.